The primary structure comprises 705 residues: MQFIALTSIGIENLLVDELTELGATVSKQTVGSVRFEADSLLAQKVCLSTRFATRVLMLIEEKEGVDDKNSLYNFARSQPWQEWFGPTQTFAVDFNGTNDSLKNTQFSGLVIKDAIVDYFNDLFEQRPNVDKQDANVRVVARLNRYGVSMYIDYSGPRLSERGYRQGQGKAPIKEHLAAALIKRSGWLENVNQPLFDPCCGAGTILIEAAGMARNEAPGLFREGFAFERLPSFRAAKFKELKEELLGNIIDPKLWLIGHDYDAQVLGKAIDNAKRAELDDIIKFKQSDATKLTAVAKLPGVVISNLPYGERIGSMAELVDLHRNLGVGFKKHFNHWKLALLGMDESLFKLLKLVRLKRYKFKNGPLDVELNLYQLDDKQVSLTTDDKKALNFEGSMSFANRLKKNKQGLKNWLKQNEITAYRVYEADIPEYNVAVDIYGDSAVIFEYAAPKEIDEKTSEKRLQDVISLTAEQLKIAPENIAVKVRKKQKGEEQYTPMAKQNRTMVVEEFGAKFKVNLFDYLDTGLFLDHRLMRRYIQENAKDKRFLNLFAYTGTASVHAALGGAKAITTVDLSKTYLKWGQDNFDLNNISNTRYRFEQADCLKWLEHATAQYDLIFLDPPTFSNSKRMKDAFDVQSDHIKLLTWVKKILSPSGTLIFSNNKRGFVMDEVGLIGLGLKAVNISDKTLSPDFKRNKKIHNSWLITHG.

One can recognise a THUMP domain in the interval 42-154 (LAQKVCLSTR…RYGVSMYIDY (113 aa)).

It belongs to the methyltransferase superfamily. RlmKL family.

The protein localises to the cytoplasm. The enzyme catalyses guanosine(2445) in 23S rRNA + S-adenosyl-L-methionine = N(2)-methylguanosine(2445) in 23S rRNA + S-adenosyl-L-homocysteine + H(+). The catalysed reaction is guanosine(2069) in 23S rRNA + S-adenosyl-L-methionine = N(2)-methylguanosine(2069) in 23S rRNA + S-adenosyl-L-homocysteine + H(+). Its function is as follows. Specifically methylates the guanine in position 2445 (m2G2445) and the guanine in position 2069 (m7G2069) of 23S rRNA. This chain is Ribosomal RNA large subunit methyltransferase K/L, found in Pseudoalteromonas translucida (strain TAC 125).